The chain runs to 119 residues: NADH-quinone oxidoreductase subunit A (119 aa).

3 helical membrane-spanning segments follow: residues Val9–Leu29, Leu63–Val83, and Ile88–Val108.

Belongs to the complex I subunit 3 family. NDH-1 is composed of 14 different subunits. Subunits NuoA, H, J, K, L, M, N constitute the membrane sector of the complex.

It is found in the cell inner membrane. The catalysed reaction is a quinone + NADH + 5 H(+)(in) = a quinol + NAD(+) + 4 H(+)(out). Functionally, NDH-1 shuttles electrons from NADH, via FMN and iron-sulfur (Fe-S) centers, to quinones in the respiratory chain. The immediate electron acceptor for the enzyme in this species is believed to be ubiquinone. Couples the redox reaction to proton translocation (for every two electrons transferred, four hydrogen ions are translocated across the cytoplasmic membrane), and thus conserves the redox energy in a proton gradient. The protein is NADH-quinone oxidoreductase subunit A of Leptothrix cholodnii (strain ATCC 51168 / LMG 8142 / SP-6) (Leptothrix discophora (strain SP-6)).